Here is an 86-residue protein sequence, read N- to C-terminus: F(1)-ATPase inhibitor STF1, mitochondrial (86 aa).

A mitochondrion-targeting transit peptide spans 1 to 23; it reads MLNRCISRNTRLPVNLRIASRFY. S24 carries the post-translational modification Phosphoserine.

This sequence belongs to the ATPase inhibitor family. Monomer and homodimer. Monomeric at pH 5.0 and dimeric at either pH 6.5 or 8.0. The protein aggregates increasingly strongly with increasing pH.

It localises to the mitochondrion. Endogenous low-affinity ATPase inhibitor, which inhibits specifically the reverse ATPase reaction of mitochondrial F(1)F(0)-type ATP synthase. Found to stabilize, together with STF2, a complex of intrinsic ATPase inhibitor INH1 and proton-translocating ATPase in mitochondrial membranes. Binds directly to purified F1-ATPase. The protein is F(1)-ATPase inhibitor STF1, mitochondrial (STF1) of Saccharomyces cerevisiae (strain ATCC 204508 / S288c) (Baker's yeast).